We begin with the raw amino-acid sequence, 140 residues long: Large ribosomal subunit protein uL11 (140 aa).

Belongs to the universal ribosomal protein uL11 family. In terms of assembly, part of the ribosomal stalk of the 50S ribosomal subunit. Interacts with L10 and the large rRNA to form the base of the stalk. L10 forms an elongated spine to which L12 dimers bind in a sequential fashion forming a multimeric L10(L12)X complex. One or more lysine residues are methylated.

Its function is as follows. Forms part of the ribosomal stalk which helps the ribosome interact with GTP-bound translation factors. The protein is Large ribosomal subunit protein uL11 of Oleidesulfovibrio alaskensis (strain ATCC BAA-1058 / DSM 17464 / G20) (Desulfovibrio alaskensis).